We begin with the raw amino-acid sequence, 426 residues long: Glutamate-1-semialdehyde 2,1-aminomutase (426 aa).

K265 carries the N6-(pyridoxal phosphate)lysine modification.

It belongs to the class-III pyridoxal-phosphate-dependent aminotransferase family. HemL subfamily. Homodimer. Requires pyridoxal 5'-phosphate as cofactor.

It is found in the cytoplasm. The enzyme catalyses (S)-4-amino-5-oxopentanoate = 5-aminolevulinate. It functions in the pathway porphyrin-containing compound metabolism; protoporphyrin-IX biosynthesis; 5-aminolevulinate from L-glutamyl-tRNA(Glu): step 2/2. The polypeptide is Glutamate-1-semialdehyde 2,1-aminomutase (Yersinia pseudotuberculosis serotype O:1b (strain IP 31758)).